Consider the following 1296-residue polypeptide: Capping protein, Arp2/3 and myosin-I linker protein 2 (1296 aa).

15 LRR repeats span residues aspartate 63 to leucine 87, glutamate 88 to valine 110, glutamate 248 to histidine 271, asparagine 273 to arginine 296, aspartate 305 to glycine 328, cysteine 363 to alanine 386, threonine 395 to alanine 415, isoleucine 426 to aspartate 448, alanine 453 to isoleucine 477, serine 480 to arginine 506, aspartate 515 to alanine 538, asparagine 542 to lysine 565, asparagine 570 to alanine 594, asparagine 598 to leucine 621, and threonine 836 to glutamate 859. The tropomodulin-like stretch occupies residues isoleucine 507–leucine 601. Residues alanine 975–arginine 1002 form a necessary for localization at the cell membrane region. Positions threonine 988–proline 1296 are disordered. A Phosphoserine modification is found at serine 1008. Composition is skewed to basic and acidic residues over residues arginine 1079–threonine 1091 and glutamate 1118–serine 1134. Serine 1134 is modified (phosphoserine). Threonine 1145 is modified (phosphothreonine). Residues threonine 1176–asparagine 1185 are compositionally biased toward polar residues. An Omega-N-methylarginine modification is found at arginine 1191. Pro residues-rich tracts occupy residues proline 1199 to serine 1209 and proline 1267 to proline 1285. Residues serine 1203 and serine 1281 each carry the phosphoserine modification.

The protein belongs to the CARMIL family. In terms of assembly, forms homodimers. Interacts (via C-terminus) with heterodimeric capping protein (CP); the interaction inhibits CP activity and hence promotes actin polymerization at the barbed end of actin filaments.

The protein localises to the cytoplasm. The protein resides in the cytoskeleton. It is found in the cell membrane. It localises to the cell projection. Its subcellular location is the lamellipodium. The protein localises to the ruffle. In terms of biological role, cell membrane-cytoskeleton-associated protein that plays a role in the regulation of actin polymerization at the barbed end of actin filaments. Prevents F-actin heterodimeric capping protein (CP) activity at the leading edges of migrating cells, and hence generates uncapped barbed ends and enhances actin polymerization. Plays a role in cell protrusion formations; involved in cell polarity, lamellipodial assembly, membrane ruffling and macropinosome formations. Involved as well in cell migration and invadopodia formation during wound healing. Required for CD28-mediated stimulation of NF-kappa-B signaling, involved in naive T cells activation, maturation into T memory cells, and differentiation into T helper cells. Required for CD28-mediated differentiation of T regulatory cells. The chain is Capping protein, Arp2/3 and myosin-I linker protein 2 from Mus musculus (Mouse).